A 338-amino-acid chain; its full sequence is UDP-3-O-acylglucosamine N-acyltransferase (338 aa).

His239 serves as the catalytic Proton acceptor.

The protein belongs to the transferase hexapeptide repeat family. LpxD subfamily. Homotrimer.

It catalyses the reaction a UDP-3-O-[(3R)-3-hydroxyacyl]-alpha-D-glucosamine + a (3R)-hydroxyacyl-[ACP] = a UDP-2-N,3-O-bis[(3R)-3-hydroxyacyl]-alpha-D-glucosamine + holo-[ACP] + H(+). It functions in the pathway bacterial outer membrane biogenesis; LPS lipid A biosynthesis. Functionally, catalyzes the N-acylation of UDP-3-O-acylglucosamine using 3-hydroxyacyl-ACP as the acyl donor. Is involved in the biosynthesis of lipid A, a phosphorylated glycolipid that anchors the lipopolysaccharide to the outer membrane of the cell. The chain is UDP-3-O-acylglucosamine N-acyltransferase from Thermosynechococcus vestitus (strain NIES-2133 / IAM M-273 / BP-1).